A 137-amino-acid polypeptide reads, in one-letter code: 15.7 kDa heat shock protein, peroxisomal (137 aa).

Residues 15–134 (QEWSRSTALI…SSKVRNVNIT (120 aa)) form the sHSP domain. The Microbody targeting signal motif lies at 135-137 (SKL).

This sequence belongs to the small heat shock protein (HSP20) family. May form oligomeric structures.

Its subcellular location is the peroxisome. Possesses chaperone activity. This chain is 15.7 kDa heat shock protein, peroxisomal (HSP15.7), found in Arabidopsis thaliana (Mouse-ear cress).